The chain runs to 174 residues: NADH-quinone oxidoreductase subunit B (174 aa).

[4Fe-4S] cluster-binding residues include C53, C54, C118, and C148.

Belongs to the complex I 20 kDa subunit family. In terms of assembly, NDH-1 is composed of 14 different subunits. Subunits NuoB, C, D, E, F, and G constitute the peripheral sector of the complex. It depends on [4Fe-4S] cluster as a cofactor.

It localises to the cell inner membrane. The enzyme catalyses a quinone + NADH + 5 H(+)(in) = a quinol + NAD(+) + 4 H(+)(out). Its function is as follows. NDH-1 shuttles electrons from NADH, via FMN and iron-sulfur (Fe-S) centers, to quinones in the respiratory chain. Couples the redox reaction to proton translocation (for every two electrons transferred, four hydrogen ions are translocated across the cytoplasmic membrane), and thus conserves the redox energy in a proton gradient. The chain is NADH-quinone oxidoreductase subunit B from Ruegeria sp. (strain TM1040) (Silicibacter sp.).